Consider the following 180-residue polypeptide: Large ribosomal subunit protein uL6 (180 aa).

This sequence belongs to the universal ribosomal protein uL6 family. Part of the 50S ribosomal subunit.

Its function is as follows. This protein binds to the 23S rRNA, and is important in its secondary structure. It is located near the subunit interface in the base of the L7/L12 stalk, and near the tRNA binding site of the peptidyltransferase center. This Clostridium botulinum (strain 657 / Type Ba4) protein is Large ribosomal subunit protein uL6.